The chain runs to 464 residues: Argininosuccinate lyase (464 aa).

Ala-2 is subject to N-acetylalanine. The residue at position 7 (Lys-7) is an N6-acetyllysine. Ser-27 lines the 2-(N(omega)-L-arginino)succinate pocket. Lys-69 carries the post-translational modification N6-acetyllysine. 2 residues coordinate 2-(N(omega)-L-arginino)succinate: Asn-114 and Thr-159. His-160 acts as the Proton acceptor in catalysis. Ser-281 functions as the Proton donor in the catalytic mechanism. Lys-288 is modified (N6-acetyllysine). Asn-289, Tyr-321, Gln-326, and Lys-329 together coordinate 2-(N(omega)-L-arginino)succinate.

This sequence belongs to the lyase 1 family. Argininosuccinate lyase subfamily. As to quaternary structure, homotetramer. Forms tissue-specific complexes with ASS1, SLC7A1, HSP90AA1 and nitric oxide synthase NOS1, NOS2 or NOS3; the complex maintenance is independent of ASL catalytic function. Post-translationally, acetylation modifies enzyme activity in response to alterations of extracellular nutrient availability. Acetylation increased with trichostin A (TSA) or with nicotinamide (NAM). Glucose increases acetylation by about a factor of 3 with decreasing enzyme activity. Acetylation on Lys-288 is decreased on the addition of extra amino acids resulting in activation of enzyme activity. In terms of tissue distribution, expressed in lung and brain (at protein level).

It carries out the reaction 2-(N(omega)-L-arginino)succinate = fumarate + L-arginine. It participates in amino-acid biosynthesis; L-arginine biosynthesis; L-arginine from L-ornithine and carbamoyl phosphate: step 3/3. The protein operates within nitrogen metabolism; urea cycle; L-arginine and fumarate from (N(omega)-L-arginino)succinate: step 1/1. With respect to regulation, enzyme activity is regulated by acetylation. Functionally, catalyzes the reversible cleavage of L-argininosuccinate to fumarate and L-arginine, an intermediate step reaction in the urea cycle mostly providing for hepatic nitrogen detoxification into excretable urea as well as de novo L-arginine synthesis in nonhepatic tissues. Essential regulator of intracellular and extracellular L-arginine pools. As part of citrulline-nitric oxide cycle, forms tissue-specific multiprotein complexes with argininosuccinate synthase ASS1, transport protein SLC7A1 and nitric oxide synthase NOS1, NOS2 or NOS3, allowing for cell-autonomous L-arginine synthesis while channeling extracellular L-arginine to nitric oxide synthesis pathway. The sequence is that of Argininosuccinate lyase (Asl) from Mus musculus (Mouse).